A 195-amino-acid polypeptide reads, in one-letter code: Probable chemoreceptor glutamine deamidase CheD 2 (195 aa).

The protein belongs to the CheD family.

The enzyme catalyses L-glutaminyl-[protein] + H2O = L-glutamyl-[protein] + NH4(+). Functionally, probably deamidates glutamine residues to glutamate on methyl-accepting chemotaxis receptors (MCPs), playing an important role in chemotaxis. This chain is Probable chemoreceptor glutamine deamidase CheD 2, found in Burkholderia thailandensis (strain ATCC 700388 / DSM 13276 / CCUG 48851 / CIP 106301 / E264).